A 118-amino-acid polypeptide reads, in one-letter code: Immunoglobulin heavy variable 4-31 (118 aa).

Residues 1 to 19 form the signal peptide; that stretch reads MKHLWFFLLLVAAPRWVLS. The interval 20-44 is framework-1; sequence QVQLQESGPGLVKPSQTLSLTCTVS. The 99-residue stretch at 20–118 folds into the Ig-like domain; the sequence is QVQLQESGPG…ADTAVYYCAR (99 aa). Residues C41 and C116 are joined by a disulfide bond. Positions 45–54 are complementarity-determining-1; it reads GGSISSGGYY. Positions 55–71 are framework-2; that stretch reads WSWIRQHPGKGLEWIGY. The interval 72-78 is complementarity-determining-2; sequence IYYSGST. Residues 79–116 are framework-3; that stretch reads YYNPSLKSLVTISVDTSKNQFSLKLSSVTAADTAVYYC. Residues 117–118 are complementarity-determining-3; it reads AR.

As to quaternary structure, immunoglobulins are composed of two identical heavy chains and two identical light chains; disulfide-linked.

The protein localises to the secreted. It is found in the cell membrane. In terms of biological role, v region of the variable domain of immunoglobulin heavy chains that participates in the antigen recognition. Immunoglobulins, also known as antibodies, are membrane-bound or secreted glycoproteins produced by B lymphocytes. In the recognition phase of humoral immunity, the membrane-bound immunoglobulins serve as receptors which, upon binding of a specific antigen, trigger the clonal expansion and differentiation of B lymphocytes into immunoglobulins-secreting plasma cells. Secreted immunoglobulins mediate the effector phase of humoral immunity, which results in the elimination of bound antigens. The antigen binding site is formed by the variable domain of one heavy chain, together with that of its associated light chain. Thus, each immunoglobulin has two antigen binding sites with remarkable affinity for a particular antigen. The variable domains are assembled by a process called V-(D)-J rearrangement and can then be subjected to somatic hypermutations which, after exposure to antigen and selection, allow affinity maturation for a particular antigen. The chain is Immunoglobulin heavy variable 4-31 from Homo sapiens (Human).